Here is a 412-residue protein sequence, read N- to C-terminus: Putative disintegrin and metalloproteinase domain-containing protein 5 (412 aa).

One can recognise a Disintegrin domain in the interval E111 to D199. An EGF-like domain is found at N351–Q385.

Interacts with TEX101. Highly expressed in testis.

In terms of biological role, this is a non catalytic metalloprotease-like protein. The sequence is that of Putative disintegrin and metalloproteinase domain-containing protein 5 (ADAM5) from Homo sapiens (Human).